The chain runs to 203 residues: Pyrrolidone-carboxylate peptidase 1 (203 aa).

Residues E78, C141, and H165 contribute to the active site.

Belongs to the peptidase C15 family. In terms of assembly, homotetramer.

The protein resides in the cytoplasm. It catalyses the reaction Release of an N-terminal pyroglutamyl group from a polypeptide, the second amino acid generally not being Pro.. Functionally, removes 5-oxoproline from various penultimate amino acid residues except L-proline. The chain is Pyrrolidone-carboxylate peptidase 1 from Caldanaerobacter subterraneus subsp. tengcongensis (strain DSM 15242 / JCM 11007 / NBRC 100824 / MB4) (Thermoanaerobacter tengcongensis).